Consider the following 146-residue polypeptide: Protein SprT-like (146 aa).

The SprT-like domain maps to 6–141 (YVKTVSIEDF…GCGLCQGKLI (136 aa)). H64 is a binding site for Zn(2+). Residue E65 is part of the active site. H68 provides a ligand contact to Zn(2+).

It belongs to the SprT family. Requires Zn(2+) as cofactor.

It is found in the cytoplasm. The polypeptide is Protein SprT-like (Streptococcus thermophilus (strain CNRZ 1066)).